We begin with the raw amino-acid sequence, 189 residues long: Pyridoxal 5'-phosphate synthase subunit PdxT (189 aa).

Position 46–48 (46–48) interacts with L-glutamine; that stretch reads GES. Cys-78 serves as the catalytic Nucleophile. L-glutamine contacts are provided by residues Arg-107 and 136–137; that span reads IR. Active-site charge relay system residues include His-173 and Glu-175.

The protein belongs to the glutaminase PdxT/SNO family. In the presence of PdxS, forms a dodecamer of heterodimers. Only shows activity in the heterodimer.

It carries out the reaction aldehydo-D-ribose 5-phosphate + D-glyceraldehyde 3-phosphate + L-glutamine = pyridoxal 5'-phosphate + L-glutamate + phosphate + 3 H2O + H(+). It catalyses the reaction L-glutamine + H2O = L-glutamate + NH4(+). It functions in the pathway cofactor biosynthesis; pyridoxal 5'-phosphate biosynthesis. Its function is as follows. Catalyzes the hydrolysis of glutamine to glutamate and ammonia as part of the biosynthesis of pyridoxal 5'-phosphate. The resulting ammonia molecule is channeled to the active site of PdxS. The polypeptide is Pyridoxal 5'-phosphate synthase subunit PdxT (Roseiflexus sp. (strain RS-1)).